Reading from the N-terminus, the 460-residue chain is MAARPNNIGIKAIELYFPSQCVDQAELEKFDGVSAGKYTIGLGQTRMSFCDDREDIYSLTLTTVSSLLRKYNIDPKSIGRLEVGTETLLDKSKSCKTVLMQLFEPCGNTNIEGVDTVNACYGGTNALFNTLNWMESSAWDGRNAIVVAGDIALYKKGNARPTGGAGCVAMLIGPDAPLVIEPGLRGSFVKHAYDFYKADLTSEYPLVDGQYSIKCYTEAVDKCYEAYNGREKTLKSQANGHSNGVDAAQEAPLDRFDYMCFHAPTCKLVSKSYARLLYNDYLADPTNELFKEVPAELKDLSYEASITDKTVEKTFMGLAKKRFAQRVQPSIQVPTMCGNMYCASVYASLVSLISNVSSADFQGKRVGIFSYGSGLASSLFSLKVKGSTEEITKNLNLQERLDARRVVAPEVYDEMCNLREKAHLQKDFKPKGSVDTILPNTYYLTNVDDMFRREYEVKKE.

Alanine 35 is a (3S)-3-hydroxy-3-methylglutaryl-CoA binding site. The active-site Proton donor/acceptor is glutamate 86. (3S)-3-hydroxy-3-methylglutaryl-CoA is bound by residues cysteine 120, asparagine 158, threonine 162, serine 212, histidine 262, lysine 271, asparagine 339, and serine 373. Residue cysteine 120 is the Acyl-thioester intermediate of the active site. Histidine 262 serves as the catalytic Proton donor/acceptor.

The protein belongs to the thiolase-like superfamily. HMG-CoA synthase family.

It carries out the reaction acetoacetyl-CoA + acetyl-CoA + H2O = (3S)-3-hydroxy-3-methylglutaryl-CoA + CoA + H(+). Its pathway is siderophore biosynthesis. Its function is as follows. Hydroxymethylglutaryl-CoA synthase involved in the biosynthesis of a ferrichrome A-like siderophors which may contribute to organismal virulence. The first step of siderophore biosynthesis is performed by the HMG-CoA synthase (HMGS) MYCGRDRAFT_54740 which catalyzes the generation of HMG-CoA and CoA using acetoacetyl-CoA and acetyl-CoA as substrates. The enoyl-CoA isomerase/hydratase MYCGRDRAFT_76805 then catalyzes the conversion of HMG-CoA to methylglutaconyl-CoA. The acyltransferase MYCGRDRAFT_85486 then fuses methylglutaconyl-CoA with hydroxyornithine to yield methylglutaconyl hydroxyornithine. Methylglutaconyl hydroxyornithine is then available for use by the nonribosomal peptide synthetase NRPS2 to generate the ferrichrome A-like siderophore. In Zymoseptoria tritici (strain CBS 115943 / IPO323) (Speckled leaf blotch fungus), this protein is Hydroxymethylglutaryl-CoA synthase MYCGRDRAFT_54740 (ERG13).